A 124-amino-acid polypeptide reads, in one-letter code: Small ribosomal subunit protein uS13 (124 aa).

The segment at 95 to 124 (GLPVRGQRTKTNARTRKGPKRTIAGKKKAR) is disordered.

The protein belongs to the universal ribosomal protein uS13 family. In terms of assembly, part of the 30S ribosomal subunit. Forms a loose heterodimer with protein S19. Forms two bridges to the 50S subunit in the 70S ribosome.

In terms of biological role, located at the top of the head of the 30S subunit, it contacts several helices of the 16S rRNA. In the 70S ribosome it contacts the 23S rRNA (bridge B1a) and protein L5 of the 50S subunit (bridge B1b), connecting the 2 subunits; these bridges are implicated in subunit movement. Contacts the tRNAs in the A and P-sites. The sequence is that of Small ribosomal subunit protein uS13 from Mycobacterium sp. (strain JLS).